We begin with the raw amino-acid sequence, 455 residues long: UPF0053 protein MT1890 (455 aa).

The region spanning 2 to 205 is the CNNM transmembrane domain; that stretch reads NLTDTVATIL…ARSGALDDAT (204 aa). 4 helical membrane passes run 6-26, 68-88, 106-126, and 148-168; these read TVAT…FVAA, LGIS…VAEL, LITF…GELV, and LFSL…NWIV. 2 CBS domains span residues 224 to 285 and 286 to 346; these read MTPR…AHTL and LTTV…VRDE.

Belongs to the UPF0053 family.

It localises to the cell membrane. This Mycobacterium tuberculosis (strain CDC 1551 / Oshkosh) protein is UPF0053 protein MT1890.